Reading from the N-terminus, the 510-residue chain is Ent-sandaracopimaradiene 3-hydroxylase (510 aa).

The helical transmembrane segment at 4–24 (MLVAGAGAAAVAAVGGLVAAA) threads the bilayer. Cys-454 lines the heme pocket.

The protein belongs to the cytochrome P450 family. Interacts with the rice dwarf virus (RDV) P2 protein. It depends on heme as a cofactor. Expressed in leaf blades and sheaths, stems and panicles.

The protein localises to the membrane. The enzyme catalyses ent-sandaracopimara-8(14),15-diene + reduced [NADPH--hemoprotein reductase] + O2 = ent-sandaracopimaradien-3beta-ol + oxidized [NADPH--hemoprotein reductase] + H2O + H(+). It catalyses the reaction 9beta-pimara-7,15-diene + reduced [NADPH--hemoprotein reductase] + O2 = 9beta-pimara-7,15-diene-3beta-ol + oxidized [NADPH--hemoprotein reductase] + H2O + H(+). In terms of biological role, catalyzes the hydroxylation of ent-sandaracopimaradiene at the C3alpha position to produce ent-3beta-hydroxy-sandaracopimaradiene, an intermediates for the biosynthesis of oryzalexin D and oryzalexin E phytoalexins. Catalyzes the hydroxylation of ent-cassadiene at the C3alpha position to produce 3alpha-hydroxy-ent-cassadiene, which may be an intermediate for the biosynthesis of phytocassane phytoalexins. Catalyzes the hydroxylation of syn-pimaradiene (9-beta-pimara-7,15-diene) at the C3beta position to produce 3-beta-syn-pimaradiene. Can hydroxylate ent-kaurene in vitro, but the product is not ent-kauren-19-ol as expected for ent-kaurene oxidase activity. This is Ent-sandaracopimaradiene 3-hydroxylase from Oryza sativa subsp. japonica (Rice).